The chain runs to 357 residues: UDP-N-acetylglucosamine--N-acetylmuramyl-(pentapeptide) pyrophosphoryl-undecaprenol N-acetylglucosamine transferase (357 aa).

UDP-N-acetyl-alpha-D-glucosamine contacts are provided by residues 14–16 (TAG), Arg168, Ser198, and Gln292.

The protein belongs to the glycosyltransferase 28 family. MurG subfamily.

It localises to the cell membrane. It catalyses the reaction di-trans,octa-cis-undecaprenyl diphospho-N-acetyl-alpha-D-muramoyl-L-alanyl-D-glutamyl-meso-2,6-diaminopimeloyl-D-alanyl-D-alanine + UDP-N-acetyl-alpha-D-glucosamine = di-trans,octa-cis-undecaprenyl diphospho-[N-acetyl-alpha-D-glucosaminyl-(1-&gt;4)]-N-acetyl-alpha-D-muramoyl-L-alanyl-D-glutamyl-meso-2,6-diaminopimeloyl-D-alanyl-D-alanine + UDP + H(+). It functions in the pathway cell wall biogenesis; peptidoglycan biosynthesis. Functionally, cell wall formation. Catalyzes the transfer of a GlcNAc subunit on undecaprenyl-pyrophosphoryl-MurNAc-pentapeptide (lipid intermediate I) to form undecaprenyl-pyrophosphoryl-MurNAc-(pentapeptide)GlcNAc (lipid intermediate II). This Oceanobacillus iheyensis (strain DSM 14371 / CIP 107618 / JCM 11309 / KCTC 3954 / HTE831) protein is UDP-N-acetylglucosamine--N-acetylmuramyl-(pentapeptide) pyrophosphoryl-undecaprenol N-acetylglucosamine transferase.